A 187-amino-acid polypeptide reads, in one-letter code: Ribosome maturation factor RimM (187 aa).

A compositionally biased stretch (polar residues) spans 1 to 17; the sequence is MTSTPSPSTADPNSTND. A disordered region spans residues 1–21; the sequence is MTSTPSPSTADPNSTNDWLPV. Residues 111 to 184 enclose the PRC barrel domain; sequence EGEFHLLDLV…WLLLTPPPGL (74 aa).

This sequence belongs to the RimM family. As to quaternary structure, binds ribosomal protein uS19.

It localises to the cytoplasm. An accessory protein needed during the final step in the assembly of 30S ribosomal subunit, possibly for assembly of the head region. Essential for efficient processing of 16S rRNA. May be needed both before and after RbfA during the maturation of 16S rRNA. It has affinity for free ribosomal 30S subunits but not for 70S ribosomes. The chain is Ribosome maturation factor RimM from Synechococcus sp. (strain CC9311).